Reading from the N-terminus, the 171-residue chain is Small ribosomal subunit protein uS5 (171 aa).

The S5 DRBM domain occupies Y14 to V77.

The protein belongs to the universal ribosomal protein uS5 family. As to quaternary structure, part of the 30S ribosomal subunit. Contacts proteins S4 and S8.

In terms of biological role, with S4 and S12 plays an important role in translational accuracy. Located at the back of the 30S subunit body where it stabilizes the conformation of the head with respect to the body. The protein is Small ribosomal subunit protein uS5 of Vesicomyosocius okutanii subsp. Calyptogena okutanii (strain HA).